Consider the following 750-residue polypeptide: Catalase-peroxidase 1 (750 aa).

The tryptophyl-tyrosyl-methioninium (Trp-Tyr) (with M-264) cross-link spans 90–238 (WHSAGTYRVM…VSAAHMGLIY (149 aa)). His91 serves as the catalytic Proton acceptor. Residues 199-218 (NEGHKESGVIDGSESKKGHK) form a disordered region. Basic and acidic residues predominate over residues 200–218 (EGHKESGVIDGSESKKGHK). The segment at residues 238–264 (YVNPEGPDGIPDPVAAARDIRTTFSRM) is a cross-link (tryptophyl-tyrosyl-methioninium (Tyr-Met) (with W-90)). Residue His279 participates in heme b binding.

This sequence belongs to the peroxidase family. Peroxidase/catalase subfamily. Homodimer or homotetramer. Predominantly homodimeric. The cofactor is heme b. Formation of the three residue Trp-Tyr-Met cross-link is important for the catalase, but not the peroxidase activity of the enzyme.

The protein localises to the cytoplasm. The enzyme catalyses H2O2 + AH2 = A + 2 H2O. It catalyses the reaction 2 H2O2 = O2 + 2 H2O. Functionally, bifunctional enzyme with both catalase and broad-spectrum peroxidase activity. The polypeptide is Catalase-peroxidase 1 (Pyricularia oryzae (strain 70-15 / ATCC MYA-4617 / FGSC 8958) (Rice blast fungus)).